Here is a 231-residue protein sequence, read N- to C-terminus: High-affinity zinc uptake system ATP-binding protein ZnuC (231 aa).

Residues 4 to 230 (VSLKDIVFGY…CLTWNSCDEL (227 aa)) enclose the ABC transporter domain.

The protein belongs to the ABC transporter superfamily. The complex is composed of two ATP-binding proteins (ZnuC), two transmembrane proteins (ZnuB) and a solute-binding protein (ZnuA).

The protein localises to the cell membrane. It carries out the reaction Zn(2+)(out) + ATP(in) + H2O(in) = Zn(2+)(in) + ADP(in) + phosphate(in) + H(+)(in). In terms of biological role, part of the high-affinity ABC transporter complex ZnuABC involved in zinc import. Responsible for energy coupling to the transport system. ZnuABC-mediated zinc transport is required for comF expression and competence development. This chain is High-affinity zinc uptake system ATP-binding protein ZnuC (znuC), found in Bacillus subtilis (strain 168).